Here is a 65-residue protein sequence, read N- to C-terminus: MPKLKTKSGAAKRFKKTGKGGFKHRCANRAHINTKMTTKRKRHLRGMNQVAKVDTTSLVQQMPYA.

Disordered regions lie at residues 1-23 (MPKL…GGFK) and 36-65 (MTTK…MPYA). Over residues 54–65 (DTTSLVQQMPYA) the composition is skewed to polar residues.

The protein belongs to the bacterial ribosomal protein bL35 family.

The chain is Large ribosomal subunit protein bL35 from Francisella tularensis subsp. tularensis (strain FSC 198).